We begin with the raw amino-acid sequence, 131 residues long: Small ribosomal subunit protein uS8 (131 aa).

Belongs to the universal ribosomal protein uS8 family. Part of the 30S ribosomal subunit. Contacts proteins S5 and S12.

Its function is as follows. One of the primary rRNA binding proteins, it binds directly to 16S rRNA central domain where it helps coordinate assembly of the platform of the 30S subunit. This chain is Small ribosomal subunit protein uS8, found in Mesomycoplasma hyopneumoniae (strain 7448) (Mycoplasma hyopneumoniae).